Here is a 1169-residue protein sequence, read N- to C-terminus: Pesticidal crystal protein Cry8Ba (1169 aa).

Positions 1 to 26 (MSPNNQNEYEIIDATPSTSVSNDSNR) are disordered. Residues 15–25 (TPSTSVSNDSN) show a composition bias toward polar residues.

The protein belongs to the delta endotoxin family.

In terms of biological role, promotes colloidosmotic lysis by binding to the midgut epithelial cells of insects. Active on various scarabaeid beetles. This is Pesticidal crystal protein Cry8Ba (cry8Ba) from Bacillus thuringiensis serovar kumamotoensis.